A 312-amino-acid chain; its full sequence is Serine protease 48 (312 aa).

The first 22 residues, 1-22, serve as a signal peptide directing secretion; it reads MGPAGLKVLLLLFLGAFQGSFT. The Peptidase S1 domain occupies 40 to 276; that stretch reads IVGGQDAALG…YQKWISAIIS (237 aa). Cys-65 and Cys-81 are disulfide-bonded. Residues His-80 and Asp-126 each act as charge relay system in the active site. Asn-149 carries N-linked (GlcNAc...) asparagine glycosylation. Cystine bridges form between Cys-160–Cys-235, Cys-190–Cys-214, and Cys-225–Cys-253. The Charge relay system role is filled by Ser-229. Asn-263 is a glycosylation site (N-linked (GlcNAc...) asparagine).

Belongs to the peptidase S1 family.

The protein localises to the secreted. The chain is Serine protease 48 (Prss48) from Mus musculus (Mouse).